The chain runs to 324 residues: UDP-N-acetylenolpyruvoylglucosamine reductase (324 aa).

One can recognise an FAD-binding PCMH-type domain in the interval 39–220 (RTGGLAELFY…RAAMHEVALH (182 aa)). Arginine 185 is an active-site residue. Catalysis depends on serine 234, which acts as the Proton donor. Residue glutamate 304 is part of the active site.

Belongs to the MurB family. FAD serves as cofactor.

It is found in the cytoplasm. It carries out the reaction UDP-N-acetyl-alpha-D-muramate + NADP(+) = UDP-N-acetyl-3-O-(1-carboxyvinyl)-alpha-D-glucosamine + NADPH + H(+). The protein operates within cell wall biogenesis; peptidoglycan biosynthesis. In terms of biological role, cell wall formation. In Bartonella bacilliformis (strain ATCC 35685 / KC583 / Herrer 020/F12,63), this protein is UDP-N-acetylenolpyruvoylglucosamine reductase.